The sequence spans 1064 residues: mRNA 3'-end-processing protein RNA14 (1064 aa).

2 disordered regions span residues 34–106 and 119–192; these read ASQS…APSA and SETP…ASAV. The segment covering 44–54 has biased composition (polar residues); it reads AQDQKSHSTLL. Low complexity-rich tracts occupy residues 66 to 86 and 151 to 191; these read SAIP…AIGD and QPAE…AASA. HAT repeat units lie at residues 327 to 364, 377 to 412, 423 to 456, 673 to 706, and 777 to 811; these read SNFA…YIRR, DVRS…FVAS, AKND…FESS, QRGA…FARR, and NDDN…YEYT. Disordered regions lie at residues 888–985 and 1022–1064; these read AVPT…DRSG and LPGA…SGRY. Composition is skewed to basic and acidic residues over residues 899–910 and 933–948; these read SYKRPAPEDIPP and RYPE…RYRD. Over residues 1026-1042 the composition is skewed to pro residues; the sequence is GMPPAPPISRGPPPPPM.

It is found in the nucleus. The protein localises to the cytoplasm. In terms of biological role, component of the cleavage factor IA (CFIA) complex, which is involved in the endonucleolytic cleavage during polyadenylation-dependent pre-mRNA 3'-end formation. This Cryptococcus neoformans var. neoformans serotype D (strain B-3501A) (Filobasidiella neoformans) protein is mRNA 3'-end-processing protein RNA14 (RNA14).